A 157-amino-acid chain; its full sequence is Protein FAM162B (157 aa).

Residues 104 to 123 (ACYIMIGLTIVACFAVIVSA) traverse the membrane as a helical segment.

Belongs to the UPF0389 family.

Its subcellular location is the membrane. The sequence is that of Protein FAM162B (Fam162b) from Mus musculus (Mouse).